A 297-amino-acid polypeptide reads, in one-letter code: tRNA pseudouridine synthase B (297 aa).

Aspartate 39 acts as the Nucleophile in catalysis.

Belongs to the pseudouridine synthase TruB family. Type 1 subfamily.

It catalyses the reaction uridine(55) in tRNA = pseudouridine(55) in tRNA. In terms of biological role, responsible for synthesis of pseudouridine from uracil-55 in the psi GC loop of transfer RNAs. The sequence is that of tRNA pseudouridine synthase B from Lactobacillus acidophilus (strain ATCC 700396 / NCK56 / N2 / NCFM).